The chain runs to 205 residues: Tumor suppressor candidate gene 1 protein homolog (205 aa).

A compositionally biased stretch (low complexity) spans 1–12 (MWRMRGGATRRG). Residues 1–49 (MWRMRGGATRRGSCGGEGGGSRGESGRLGRAREGGGGGGGVGWRGRAGG) are disordered. Over residues 13–23 (SCGGEGGGSRG) the composition is skewed to gly residues. The segment covering 24–33 (ESGRLGRARE) has biased composition (basic and acidic residues). A compositionally biased stretch (gly residues) spans 34 to 48 (GGGGGGGVGWRGRAG). A coiled-coil region spans residues 66-110 (LEALRARDERDRQNARLREENARLRLENRRLRRENRSLFRQALRL). Disordered regions lie at residues 113–149 (DSGE…SPRA) and 174–205 (GARP…RPWL). Ser146 is subject to Phosphoserine. Over residues 196–205 (HDPDVPRPWL) the composition is skewed to basic and acidic residues.

This Mus musculus (Mouse) protein is Tumor suppressor candidate gene 1 protein homolog (Tusc1).